A 427-amino-acid chain; its full sequence is Serine--tRNA ligase (427 aa).

L-serine is bound at residue 231–233 (TAE). 262–264 (RSE) serves as a coordination point for ATP. L-serine is bound at residue Glu-285. 349–352 (EISS) contributes to the ATP binding site. Residue Ser-385 participates in L-serine binding.

The protein belongs to the class-II aminoacyl-tRNA synthetase family. Type-1 seryl-tRNA synthetase subfamily. As to quaternary structure, homodimer. The tRNA molecule binds across the dimer.

It localises to the cytoplasm. It carries out the reaction tRNA(Ser) + L-serine + ATP = L-seryl-tRNA(Ser) + AMP + diphosphate + H(+). The enzyme catalyses tRNA(Sec) + L-serine + ATP = L-seryl-tRNA(Sec) + AMP + diphosphate + H(+). It participates in aminoacyl-tRNA biosynthesis; selenocysteinyl-tRNA(Sec) biosynthesis; L-seryl-tRNA(Sec) from L-serine and tRNA(Sec): step 1/1. Functionally, catalyzes the attachment of serine to tRNA(Ser). Is also able to aminoacylate tRNA(Sec) with serine, to form the misacylated tRNA L-seryl-tRNA(Sec), which will be further converted into selenocysteinyl-tRNA(Sec). In Rhizobium rhizogenes (strain K84 / ATCC BAA-868) (Agrobacterium radiobacter), this protein is Serine--tRNA ligase.